A 146-amino-acid polypeptide reads, in one-letter code: 3-dehydroquinate dehydratase (146 aa).

Tyrosine 22 (proton acceptor) is an active-site residue. Substrate contacts are provided by asparagine 73, histidine 79, and aspartate 86. The Proton donor role is filled by histidine 99. Residues 100 to 101 and arginine 110 each bind substrate; that span reads IS.

Belongs to the type-II 3-dehydroquinase family. As to quaternary structure, homododecamer.

The catalysed reaction is 3-dehydroquinate = 3-dehydroshikimate + H2O. The protein operates within metabolic intermediate biosynthesis; chorismate biosynthesis; chorismate from D-erythrose 4-phosphate and phosphoenolpyruvate: step 3/7. Functionally, catalyzes a trans-dehydration via an enolate intermediate. This chain is 3-dehydroquinate dehydratase, found in Prochlorococcus marinus (strain MIT 9515).